We begin with the raw amino-acid sequence, 218 residues long: uncharacterized protein (218 aa).

The 80-residue stretch at 4–83 (GISIEAENKV…IHSSLKKIYG (80 aa)) folds into the ACT domain.

This is an uncharacterized protein from Methanocaldococcus jannaschii (strain ATCC 43067 / DSM 2661 / JAL-1 / JCM 10045 / NBRC 100440) (Methanococcus jannaschii).